The primary structure comprises 299 residues: Very long chain fatty acid elongase 5 (299 aa).

Residue methionine 1 is modified to N-acetylmethionine. 7 consecutive transmembrane segments (helical) span residues 26–46 (WFLL…LLIV), 64–84 (ILVV…CELV), 112–132 (VLWW…FFIL), 139–158 (ITVL…WFVM), 168–187 (FGAT…YGLS), 205–225 (GQLL…IWPC), and 226–246 (TFPL…IALF). Residues 274 to 299 (MAAVNGHTNSFSPLENNVKPRKLRKD) form a disordered region. Positions 279–288 (GHTNSFSPLE) are enriched in polar residues. Serine 285 is subject to Phosphoserine.

The protein belongs to the ELO family. ELOVL5 subfamily. In terms of assembly, interacts with TECR. In terms of tissue distribution, ubiquitous. Highly expressed in the adrenal gland and testis. Weakly expressed in prostate, lung and brain. Expressed in the cerebellum.

It is found in the endoplasmic reticulum membrane. Its subcellular location is the cell projection. It localises to the dendrite. The catalysed reaction is a very-long-chain acyl-CoA + malonyl-CoA + H(+) = a very-long-chain 3-oxoacyl-CoA + CO2 + CoA. The enzyme catalyses (6Z,9Z,12Z)-octadecatrienoyl-CoA + malonyl-CoA + H(+) = (8Z,11Z,14Z)-3-oxoeicosatrienoyl-CoA + CO2 + CoA. It catalyses the reaction (9Z,12Z,15Z)-octadecatrienoyl-CoA + malonyl-CoA + H(+) = (11Z,14Z,17Z)-3-oxoeicosatrienoyl-CoA + CO2 + CoA. It carries out the reaction (9Z)-hexadecenoyl-CoA + malonyl-CoA + H(+) = 3-oxo-(11Z)-octadecenoyl-CoA + CO2 + CoA. The catalysed reaction is (9Z)-octadecenoyl-CoA + malonyl-CoA + H(+) = 3-oxo-(11Z)-eicosenoyl-CoA + CO2 + CoA. The enzyme catalyses (11Z)-octadecenoyl-CoA + malonyl-CoA + H(+) = 3-oxo-(13Z)-eicosenoyl-CoA + CO2 + CoA. It catalyses the reaction (9Z,12Z)-octadecadienoyl-CoA + malonyl-CoA + H(+) = (11Z,14Z)-3-oxoicosa-11,14-dienoyl-CoA + CO2 + CoA. It carries out the reaction (6Z,9Z,12Z,15Z)-octadecatetraenoyl-CoA + malonyl-CoA + H(+) = (8Z,11Z,14Z,17Z)-3-oxoicosatetraenoyl-CoA + CO2 + CoA. The catalysed reaction is (5Z,8Z,11Z,14Z)-eicosatetraenoyl-CoA + malonyl-CoA + H(+) = (7Z,10Z,13Z,16Z)-3-oxodocosatetraenoyl-CoA + CO2 + CoA. The enzyme catalyses (5Z,8Z,11Z,14Z,17Z)-eicosapentaenoyl-CoA + malonyl-CoA + H(+) = 3-oxo-(7Z,10Z,13Z,16Z,19Z)-docosapentaenoyl-CoA + CO2 + CoA. The protein operates within lipid metabolism; polyunsaturated fatty acid biosynthesis. Its function is as follows. Catalyzes the first and rate-limiting reaction of the four reactions that constitute the long-chain fatty acids elongation cycle. This endoplasmic reticulum-bound enzymatic process allows the addition of 2 carbons to the chain of long- and very long-chain fatty acids (VLCFAs) per cycle. Condensing enzyme that acts specifically toward polyunsaturated acyl-CoA with the higher activity toward C18:3(n-6) acyl-CoA. May participate in the production of monounsaturated and of polyunsaturated VLCFAs of different chain lengths that are involved in multiple biological processes as precursors of membrane lipids and lipid mediators. In conditions where the essential linoleic and alpha linoleic fatty acids are lacking it is also involved in the synthesis of Mead acid from oleic acid. The chain is Very long chain fatty acid elongase 5 from Homo sapiens (Human).